Here is a 284-residue protein sequence, read N- to C-terminus: Pantothenate synthetase (284 aa).

30–37 (MGALHDGH) provides a ligand contact to ATP. His37 (proton donor) is an active-site residue. Gln61 lines the (R)-pantoate pocket. Residue Gln61 participates in beta-alanine binding. 147-150 (GEKD) provides a ligand contact to ATP. (R)-pantoate is bound at residue Gln153. ATP is bound by residues Val176 and 184 to 187 (KSSR).

The protein belongs to the pantothenate synthetase family. Homodimer.

The protein resides in the cytoplasm. The enzyme catalyses (R)-pantoate + beta-alanine + ATP = (R)-pantothenate + AMP + diphosphate + H(+). It functions in the pathway cofactor biosynthesis; (R)-pantothenate biosynthesis; (R)-pantothenate from (R)-pantoate and beta-alanine: step 1/1. In terms of biological role, catalyzes the condensation of pantoate with beta-alanine in an ATP-dependent reaction via a pantoyl-adenylate intermediate. The sequence is that of Pantothenate synthetase from Chloroherpeton thalassium (strain ATCC 35110 / GB-78).